The following is a 256-amino-acid chain: MVYGELIYHPVVTKLLKFLDSSASREKLLRLLQYLCRFLTYYTFRRNINIETIQLIKKIQSSIAISRKPLRFLKNLPHLKNLNKIYSNELLDSTIRIGDLIKNFGYALYFQFDTLQWLKLLGLLTSKNSGALYFKVDKLAANFWLIGLTGSIITDLRNLKISYDSNKALLNEINSQEKTDGSITSDEKLIVQNNELILKNNEKINLNKRDLFKNVLDSLIALKGSQLIDLNDGVLGFAGIITSIIGIEDIWNATKA.

This sequence belongs to the peroxin-11 family.

It is found in the peroxisome membrane. Functionally, involved in peroxisomal proliferation. Could participate in peroxisomal elongation or fission. May be involved in parceling of peroxisomes into regular quanta. The sequence is that of Peroxisomal membrane protein PMP30A (PEX11A) from Candida boidinii (Yeast).